Reading from the N-terminus, the 373-residue chain is Alanine racemase (373 aa).

Lysine 40 functions as the Proton acceptor; specific for D-alanine in the catalytic mechanism. N6-(pyridoxal phosphate)lysine is present on lysine 40. Arginine 140 contributes to the substrate binding site. Residue tyrosine 268 is the Proton acceptor; specific for L-alanine of the active site. Residue methionine 315 coordinates substrate.

The protein belongs to the alanine racemase family. Requires pyridoxal 5'-phosphate as cofactor.

The enzyme catalyses L-alanine = D-alanine. It participates in amino-acid biosynthesis; D-alanine biosynthesis; D-alanine from L-alanine: step 1/1. Catalyzes the interconversion of L-alanine and D-alanine. May also act on other amino acids. This Limosilactobacillus fermentum (strain NBRC 3956 / LMG 18251) (Lactobacillus fermentum) protein is Alanine racemase (alr).